We begin with the raw amino-acid sequence, 185 residues long: Elongation factor P (185 aa).

The protein belongs to the elongation factor P family.

It is found in the cytoplasm. Its pathway is protein biosynthesis; polypeptide chain elongation. Its function is as follows. Involved in peptide bond synthesis. Stimulates efficient translation and peptide-bond synthesis on native or reconstituted 70S ribosomes in vitro. Probably functions indirectly by altering the affinity of the ribosome for aminoacyl-tRNA, thus increasing their reactivity as acceptors for peptidyl transferase. This is Elongation factor P from Fervidobacterium nodosum (strain ATCC 35602 / DSM 5306 / Rt17-B1).